Here is a 433-residue protein sequence, read N- to C-terminus: Homoserine dehydrogenase (433 aa).

T13 and V14 together coordinate NADPH. 2 residues coordinate NAD(+): V14 and V33. Position 14 (V14) interacts with NADP(+). Residues K45 and K105 each coordinate NADPH. The NADP(+) site is built by K45 and K105. The Na(+) site is built by E129, V132, G134, and I136. Residues G187 and E190 each coordinate NADP(+). L-homoserine-binding residues include E190 and D201. Catalysis depends on K205, which acts as the Proton donor. G302 lines the NADPH pocket. G302 is an NAD(+) binding site. G302 lines the NADP(+) pocket. Residues 350–426 (FLRIHVKDEV…VVQEVKSTYR (77 aa)) enclose the ACT domain.

This sequence belongs to the homoserine dehydrogenase family. Homotetramer. A metal cation is required as a cofactor.

The protein resides in the cytoplasm. It localises to the secreted. The enzyme catalyses L-homoserine + NADP(+) = L-aspartate 4-semialdehyde + NADPH + H(+). It functions in the pathway amino-acid biosynthesis; L-methionine biosynthesis via de novo pathway; L-homoserine from L-aspartate: step 3/3. The protein operates within amino-acid biosynthesis; L-threonine biosynthesis; L-threonine from L-aspartate: step 3/5. With respect to regulation, feedback inhibition by threonine. Activated by sodium ions. Its function is as follows. Catalyzes the conversion of L-aspartate-beta-semialdehyde (L-Asa) to L-homoserine (L-Hse), the third step in the biosynthesis of threonine and methionine from aspartate. Utilizes NADPH but not NADH as coenzyme. This Bacillus subtilis (strain 168) protein is Homoserine dehydrogenase (hom).